Here is a 411-residue protein sequence, read N- to C-terminus: CinA-like protein (411 aa).

The protein belongs to the CinA family.

This Dictyoglomus turgidum (strain DSM 6724 / Z-1310) protein is CinA-like protein.